We begin with the raw amino-acid sequence, 422 residues long: UDP-N-acetylglucosamine 1-carboxyvinyltransferase (422 aa).

22-23 is a binding site for phosphoenolpyruvate; it reads KN. Arginine 93 contributes to the UDP-N-acetyl-alpha-D-glucosamine binding site. Cysteine 117 serves as the catalytic Proton donor. 2-(S-cysteinyl)pyruvic acid O-phosphothioketal is present on cysteine 117. UDP-N-acetyl-alpha-D-glucosamine is bound by residues 122–126, aspartate 308, and isoleucine 330; that span reads RPVDL.

Belongs to the EPSP synthase family. MurA subfamily.

It is found in the cytoplasm. It carries out the reaction phosphoenolpyruvate + UDP-N-acetyl-alpha-D-glucosamine = UDP-N-acetyl-3-O-(1-carboxyvinyl)-alpha-D-glucosamine + phosphate. The protein operates within cell wall biogenesis; peptidoglycan biosynthesis. In terms of biological role, cell wall formation. Adds enolpyruvyl to UDP-N-acetylglucosamine. The protein is UDP-N-acetylglucosamine 1-carboxyvinyltransferase of Legionella pneumophila (strain Paris).